The primary structure comprises 203 residues: NAD(P)H dehydrogenase (quinone) (203 aa).

Positions 3–194 (VLIAYYSMYG…AAARYQGKHV (192 aa)) constitute a Flavodoxin-like domain. Residues 9-14 (SMYGHI) and 82-84 (TRF) each bind FMN. Y11 provides a ligand contact to NAD(+). W102 provides a ligand contact to substrate. Residues 117–123 (SSATQHG) and H138 each bind FMN.

It belongs to the WrbA family. The cofactor is FMN.

The enzyme catalyses a quinone + NADH + H(+) = a quinol + NAD(+). It carries out the reaction a quinone + NADPH + H(+) = a quinol + NADP(+). The protein is NAD(P)H dehydrogenase (quinone) of Geotalea uraniireducens (strain Rf4) (Geobacter uraniireducens).